The following is a 223-amino-acid chain: Mitochondrial cardiolipin hydrolase (223 aa).

Over Met-1–Ser-6 the chain is Mitochondrial intermembrane. The chain crosses the membrane as a helical span at residues Lys-7–Val-24. The Cytoplasmic portion of the chain corresponds to Ala-25 to Lys-223. The PLD phosphodiesterase domain occupies Thr-164–Ala-191. Catalysis depends on residues His-169, Lys-171, and Asp-176.

It belongs to the phospholipase D family. MitoPLD/Zucchini subfamily. Homodimer.

Its subcellular location is the mitochondrion outer membrane. Functionally, plays a critical role in PIWI-interacting RNA (piRNA) biogenesis. piRNAs provide essential protection against the activity of mobile genetic elements. piRNA-mediated transposon silencing is thus critical for maintaining genome stability. Backbone-non-specific, single strand-specific nuclease, cleaving either RNA or DNA substrates with similar affinity. Produces 5' phosphate and 3' hydroxyl termini, suggesting it could directly participate in the processing of primary piRNA transcripts. Has been proposed to act as a cardiolipin hydrolase to generate phosphatidic acid at mitochondrial surface. Although it cannot be excluded that it can act as a phospholipase in some circumstances, this activity could not be confirmed. In Chlamydomonas reinhardtii (Chlamydomonas smithii), this protein is Mitochondrial cardiolipin hydrolase.